A 415-amino-acid polypeptide reads, in one-letter code: Squalene synthase 10 (415 aa).

The next 2 membrane-spanning stretches (helical) occupy residues 281–301 and 392–412; these read AIFRFCAIPQIMAIGTLALCF and LIVILFIILAILYAYLSSNLP.

It belongs to the phytoene/squalene synthase family. It depends on Mg(2+) as a cofactor. The cofactor is Mn(2+).

It localises to the endoplasmic reticulum membrane. The enzyme catalyses 2 (2E,6E)-farnesyl diphosphate + NADH + H(+) = squalene + 2 diphosphate + NAD(+). It catalyses the reaction 2 (2E,6E)-farnesyl diphosphate + NADPH + H(+) = squalene + 2 diphosphate + NADP(+). The protein operates within terpene metabolism; lanosterol biosynthesis; lanosterol from farnesyl diphosphate: step 1/3. Functionally, component of the triterpene saponins (e.g. ginsenosides or panaxosides) and phytosterols biosynthetic pathways. Catalyzes the biosynthesis of squalene. The protein is Squalene synthase 10 of Panax ginseng (Korean ginseng).